The following is a 241-amino-acid chain: Geranylgeranylglyceryl phosphate synthase (241 aa).

2 residues coordinate Mg(2+): Asp19 and Ser46. Residues 167 to 173, 198 to 199, and 220 to 221 each bind sn-glycerol 1-phosphate; these read YLEAGSG, GG, and GT.

Belongs to the GGGP/HepGP synthase family. Group II subfamily. Mg(2+) is required as a cofactor.

It localises to the cytoplasm. It carries out the reaction sn-glycerol 1-phosphate + (2E,6E,10E)-geranylgeranyl diphosphate = sn-3-O-(geranylgeranyl)glycerol 1-phosphate + diphosphate. It functions in the pathway membrane lipid metabolism; glycerophospholipid metabolism. Its function is as follows. Prenyltransferase that catalyzes the transfer of the geranylgeranyl moiety of geranylgeranyl diphosphate (GGPP) to the C3 hydroxyl of sn-glycerol-1-phosphate (G1P). This reaction is the first ether-bond-formation step in the biosynthesis of archaeal membrane lipids. This chain is Geranylgeranylglyceryl phosphate synthase, found in Pyrobaculum calidifontis (strain DSM 21063 / JCM 11548 / VA1).